Here is a 125-residue protein sequence, read N- to C-terminus: Histone H2A (125 aa).

The segment covering M1–S18 has biased composition (basic residues). A disordered region spans residues M1 to A21. N-acetylserine is present on S2. An N5-methylglutamine modification is found at Q104.

This sequence belongs to the histone H2A family. The nucleosome is a histone octamer containing two molecules each of H2A, H2B, H3 and H4 assembled in one H3-H4 heterotetramer and two H2A-H2B heterodimers. The octamer wraps approximately 147 bp of DNA.

The protein localises to the nucleus. The protein resides in the chromosome. Functionally, core component of nucleosome. Nucleosomes wrap and compact DNA into chromatin, limiting DNA accessibility to the cellular machineries which require DNA as a template. Histones thereby play a central role in transcription regulation, DNA repair, DNA replication and chromosomal stability. DNA accessibility is regulated via a complex set of post-translational modifications of histones, also called histone code, and nucleosome remodeling. The polypeptide is Histone H2A (Mytilus trossulus (Blue mussel)).